The chain runs to 284 residues: Tropomyosin alpha-3 chain (284 aa).

Methionine 1 bears the N-acetylmethionine mark. Residues 1 to 43 (MEAIKKKMQMLKLDKENALDRAEQAEAEQKQAEERSKQLEDEL) form a disordered region. Positions 1–284 (MEAIKKKMQM…DHALNDMTSI (284 aa)) form a coiled coil. Glutamate 2 is modified (N-acetylalanine). The span at 12 to 40 (KLDKENALDRAEQAEAEQKQAEERSKQLE) shows a compositional bias: basic and acidic residues. Threonine 53 bears the Phosphothreonine mark. 2 positions are modified to phosphoserine: serine 61 and serine 87. Position 108 is a phosphothreonine (threonine 108). Phosphoserine occurs at positions 206 and 215. The residue at position 228 (leucine 228) is an N6-acetyllysine. Position 252 is a phosphothreonine (threonine 252). A Phosphotyrosine modification is found at tyrosine 261. Phosphoserine is present on serine 271. Threonine 282 carries the phosphothreonine modification. A Phosphoserine modification is found at serine 283.

The protein belongs to the tropomyosin family. As to quaternary structure, homodimer. Heterodimer of an alpha (TPM1, TPM3 or TPM4) and a beta (TPM2) chain. Interacts with TMOD1. Interacts with TNNT1.

It localises to the cytoplasm. The protein resides in the cytoskeleton. In terms of biological role, binds to actin filaments in muscle and non-muscle cells. Plays a central role, in association with the troponin complex, in the calcium dependent regulation of vertebrate striated muscle contraction. Smooth muscle contraction is regulated by interaction with caldesmon. In non-muscle cells is implicated in stabilizing cytoskeleton actin filaments. This is Tropomyosin alpha-3 chain (TPM3) from Bos taurus (Bovine).